The following is a 573-amino-acid chain: MLO-like protein 2 (573 aa).

Topologically, residues 1 to 15 (MADQVKERTLEETST) are extracellular. The helical transmembrane segment at 16-36 (WAVAVVCFVLLFISIVLEHSI) threads the bilayer. Topologically, residues 37–61 (HKIGTWFKKKHKQALFEALEKVKAE) are cytoplasmic. The chain crosses the membrane as a helical span at residues 62–82 (LMLLGFISLLLTIGQTPISNI). Residues 83 to 164 (CISQKVASTM…VSAYGIHQLH (82 aa)) lie on the Extracellular side of the membrane. A helical membrane pass occupies residues 165-185 (IFIFVLAVVHVVYCIVTYAFG). Residues 186-287 (KIKMRTWKSW…KYIQRSLEKD (102 aa)) are Cytoplasmic-facing. The helical transmembrane segment at 288–308 (FKTVVEISPVIWFVAVLFLLT) threads the bilayer. At 309-317 (NSYGLRSYL) the chain is on the extracellular side. The helical transmembrane segment at 318 to 338 (WLPFIPLVVILIVGTKLEVII) threads the bilayer. Residues 339-371 (TKLGLRIQEKGDVVRGAPVVQPGDDLFWFGKPR) lie on the Cytoplasmic side of the membrane. A helical membrane pass occupies residues 372-392 (FILFLIHLVLFTNAFQLAFFA). Over 393-415 (WSTYEFNLNNCFHESTADVVIRL) the chain is Extracellular. Residues 416 to 436 (VVGAVVQILCSYVTLPLYALV) traverse the membrane as a helical segment. Residues 437–573 (TQMGSKMKPT…KSLRDFSFKK (137 aa)) are Cytoplasmic-facing. The segment at 450–471 (DRVATALKKWHHTAKNETKHGR) is calmodulin-binding. Residues 462–573 (TAKNETKHGR…KSLRDFSFKK (112 aa)) are disordered. Polar residues-rich tracts occupy residues 473–490 (SGSN…THGS) and 498–513 (NFNN…SPSP). Serine 512 is subject to Phosphoserine. Residues 522–548 (EHQFWDPESQHQEAETSTHHSLAHESS) are compositionally biased toward basic and acidic residues.

The protein belongs to the MLO family.

Its subcellular location is the membrane. In terms of biological role, may be involved in modulation of pathogen defense and leaf cell death. Activity seems to be regulated by Ca(2+)-dependent calmodulin binding and seems not to require heterotrimeric G proteins. The sequence is that of MLO-like protein 2 (MLO2) from Arabidopsis thaliana (Mouse-ear cress).